The sequence spans 621 residues: uncharacterized protein (621 aa).

Disordered regions lie at residues Phe92–Gln134 and Lys268–Ile310. Positions Asn94–Gln134 are enriched in low complexity. Positions Thr296 to Ile310 are enriched in acidic residues. Positions Ala354–Glu401 form a coiled coil.

This is an uncharacterized protein from Acanthamoeba polyphaga mimivirus (APMV).